We begin with the raw amino-acid sequence, 213 residues long: Achelase-1 (213 aa).

One can recognise a Peptidase S1 domain in the interval 1 to 213; it reads IVGGSVTTIG…RYTSWIQSNA (213 aa). Cysteine 26 and cysteine 42 are disulfide-bonded. Catalysis depends on charge relay system residues histidine 41 and aspartate 86. Cysteine 155 and cysteine 172 are oxidised to a cystine. Catalysis depends on serine 188, which acts as the Charge relay system.

This sequence belongs to the peptidase S1 family. Hemolymph and saliva of the larval form (caterpillar).

Its subcellular location is the secreted. The protein localises to the extracellular space. Sensitive to serine proteinase inhibitors and thiol proteinase inhibitors. Fibrinolytic activity; shows preferential cleavage of Arg-Gly bonds in all three fibrinogen chains. Contact with the caterpillars causes severe bleeding, due the anticoagulant effect of the protein. This chain is Achelase-1, found in Lonomia achelous (Giant silkworm moth).